A 197-amino-acid chain; its full sequence is MQLQVARIGKPHGIRGEVTVQVLTDAPEDRFIPGTRFVVEPASAGPLTVDSARWNKDILLLGFEGIETRNQAEALRGAKLFIETEELEEEDDEGWYEHELVGLDVRVGDAVVGTISGLRTLPVQDLIVVESPDGKEILIPFVEEIVPEVNVGEKYILVTPPPGLFEINVEDSGETSDAGESGPGEAEPGKAEAGDNA.

In terms of domain architecture, PRC barrel spans 92–164 (DEGWYEHELV…YILVTPPPGL (73 aa)). The interval 167–197 (INVEDSGETSDAGESGPGEAEPGKAEAGDNA) is disordered. Residues 176–186 (SDAGESGPGEA) are compositionally biased toward low complexity. Residues 187-197 (EPGKAEAGDNA) show a composition bias toward basic and acidic residues.

This sequence belongs to the RimM family. Binds ribosomal protein uS19.

It is found in the cytoplasm. Its function is as follows. An accessory protein needed during the final step in the assembly of 30S ribosomal subunit, possibly for assembly of the head region. Essential for efficient processing of 16S rRNA. May be needed both before and after RbfA during the maturation of 16S rRNA. It has affinity for free ribosomal 30S subunits but not for 70S ribosomes. This chain is Ribosome maturation factor RimM, found in Arthrobacter sp. (strain FB24).